The sequence spans 529 residues: FAD-binding monooxygenase BOA2 (529 aa).

FAD-binding positions include 58–61 (VWWK), 70–71 (DI), and Y76. 68 to 70 (ACD) provides a ligand contact to NADP(+). NADP(+) contacts are provided by residues 198-204 (TGPSACQ) and 221-222 (RS).

This sequence belongs to the FAD-binding monooxygenase family. Requires FAD as cofactor.

It participates in polyketide biosynthesis. Functionally, FAD-binding monooxygenase; part of the gene cluster A that mediates the biosynthesis of botcinic acid and its botcinin derivatives, acetate-derived polyketides that contribute to virulence when combined with the sesquiterpene botrydial. Botcinic acid and its derivatives have been shown to induce chlorosis and necrosis during host plant infection, but also have antifungal activities. Two polyketide synthases, BOA6 and BOA9, are involved in the biosynthesis of botcinins. BOA6 mediates the formation of the per-methylated tetraketide core by condensation of four units of malonyl-CoA with one unit of acetyl-CoA, which would be methylated in activated methylene groups to yield a bicyclic acid intermediate that could then either be converted to botrylactone derivatives or lose the starter acetate unit through a retro-Claisen type C-C bond cleavage to yield botcinin derivatives. The second polyketide synthase, BOA9, is probably required for the biosynthesis of the tetraketide side chain of botcinins. The methyltransferase (MT) domain within BOA6 is probably responsible for the incorporation of four methyl groups. The trans-enoyl reductase BOA5 might take over the enoyl reductase function of BOA6 that misses an ER domain. The monooxygenases BOA2, BOA3 and BOA4 might be involved in further hydroxylations at C4, C5 and C8, whereas BOA7, close to BOA9, could potentially be involved in the hydroxylation at C4 in the side chain of botcinins. In Botryotinia fuckeliana (strain B05.10) (Noble rot fungus), this protein is FAD-binding monooxygenase BOA2.